The sequence spans 406 residues: Calreticulin (406 aa).

An N-terminal signal peptide occupies residues 1-17 (MMWCKTVIVLLATVGFI). A disulfide bridge connects residues C105 and C137. An alpha-D-glucoside contacts are provided by Y109, K111, Y128, and D135. A run of 7 repeats spans residues 191–202 (VESGNLEDDWDF), 210–221 (DPTATKPEDWDD), 227–238 (DPDDKKPEDWDK), 244–255 (DPDATKPEDWDD), 259–269 (GEWEPPMIDNP), 273–283 (GEWQPKQLDNP), and 287–297 (GAWEHPEIANP). The segment at 191–255 (VESGNLEDDW…DATKPEDWDD (65 aa)) is 4 X approximate repeats. The span at 207–251 (KIKDPTATKPEDWDDRATIPDPDDKKPEDWDKPEHIPDPDATKPE) shows a compositional bias: basic and acidic residues. The disordered stretch occupies residues 207-259 (KIKDPTATKPEDWDDRATIPDPDDKKPEDWDKPEHIPDPDATKPEDWDDEMDG). Residues 259–297 (GEWEPPMIDNPEFKGEWQPKQLDNPNYKGAWEHPEIANP) form a 3 X approximate repeats region. D317 lines the an alpha-D-glucoside pocket. A disordered region spans residues 347–406 (KNTQAGEKKMKEAQDEVQRKKDEEEAKKASDKDDEDEDDDDEEKDDESKQDKDQSEHDEL). A compositionally biased stretch (basic and acidic residues) spans 352-377 (GEKKMKEAQDEVQRKKDEEEAKKASD). Acidic residues predominate over residues 378 to 391 (KDDEDEDDDDEEKD). The segment covering 392–406 (DESKQDKDQSEHDEL) has biased composition (basic and acidic residues).

The protein belongs to the calreticulin family.

The protein localises to the endoplasmic reticulum lumen. Functionally, molecular calcium-binding chaperone promoting folding, oligomeric assembly and quality control in the ER via the calreticulin/calnexin cycle. This lectin may interact transiently with almost all of the monoglucosylated glycoproteins that are synthesized in the ER. This Drosophila melanogaster (Fruit fly) protein is Calreticulin.